The sequence spans 74 residues: Protein kish-B (74 aa).

The N-terminal stretch at 1–22 (MTNVYSLDGILVFGLLFVCTCA) is a signal peptide. The Extracellular portion of the chain corresponds to 23–52 (YFKKVPRLKTWLLSEKKGVWGVFYKAAVIG). Residues 53–73 (TRLHAAVAIACVVMAFYVLFI) form a helical membrane-spanning segment. Lys74 is a topological domain (cytoplasmic).

Belongs to the KISH family.

It is found in the golgi apparatus membrane. Involved in the early part of the secretory pathway. The chain is Protein kish-B (TMEM167B) from Homo sapiens (Human).